Consider the following 174-residue polypeptide: D(1B) dopamine receptor (174 aa).

Residues 1 to 10 (SILNLCIISV) form a helical membrane-spanning segment. At 11 to 32 (DRYWAISRPFCYERKMTQRVAL) the chain is on the cytoplasmic side. Residues 33 to 54 (VMVGLAWTLSILISFIPVQLHW) traverse the membrane as a helical segment. The Extracellular portion of the chain corresponds to 55-96 (HRDKVGSRDGLDPPSNLANGTPWEEAGESDRSAENCDSSLNR). The interval 64 to 88 (GLDPPSNLANGTPWEEAGESDRSAE) is disordered. The N-linked (GlcNAc...) asparagine glycan is linked to N95. A helical transmembrane segment spans residues 97–119 (TYAISSSLISFYIPVAIMIVTYT). At 120 to 169 (RIYRIAQVQIRRISSLERAAEHAQSCRSREACAPDSGLRASIKKETKVLK) the chain is on the cytoplasmic side. A helical membrane pass occupies residues 170-174 (TLSVI).

This sequence belongs to the G-protein coupled receptor 1 family.

The protein resides in the cell membrane. Its function is as follows. Dopamine receptor whose activity is mediated by G proteins which activate adenylyl cyclase. The chain is D(1B) dopamine receptor (DRD5) from Bos taurus (Bovine).